A 311-amino-acid polypeptide reads, in one-letter code: MNVQERRNLNAAVERHTSDHVSWYLSSIGRIPLLTAEEEVELSRKVQLMMALLENPDAESNSENQAVLQAGQRAKTKMLKANLRLVVSVAKKYQNQGLELLDLIQEGSLGLERAVEKFDPALGYKFSTYAYWWIRQSMTRAIDNHARTIRLPIHVSEKISRIKKMTRELTHQLKRLPSRAEIAEALKLPLQDVEMLLSQSTPCTSLDAQARGDDGRSFLGDLIPDPKSLEPMDAMDRHIQHEQISTWLAHLTEREQQVLQLRFGLHDGEQHTLAEIGRRLNVSRERIRQVEARALQKLRVLSQQPLCPEAC.

Residues 78-148 (MLKANLRLVV…TRAIDNHART (71 aa)) are sigma-70 factor domain-2. Positions 102-105 (DLIQ) match the Interaction with polymerase core subunit RpoC motif. The sigma-70 factor domain-3 stretch occupies residues 157–234 (EKISRIKKMT…DPKSLEPMDA (78 aa)). The interval 247–304 (WLAHLTEREQQVLQLRFGLHDGEQHTLAEIGRRLNVSRERIRQVEARALQKLRVLSQQ) is sigma-70 factor domain-4. Positions 273–292 (LAEIGRRLNVSRERIRQVEA) form a DNA-binding region, H-T-H motif.

This sequence belongs to the sigma-70 factor family.

It localises to the cytoplasm. In terms of biological role, sigma factors are initiation factors that promote the attachment of RNA polymerase to specific initiation sites and are then released. The sequence is that of RNA polymerase sigma factor SigA4 (sigA4) from Synechococcus elongatus (strain ATCC 33912 / PCC 7942 / FACHB-805) (Anacystis nidulans R2).